The primary structure comprises 67 residues: Large ribosomal subunit protein bL35 (67 aa).

The protein belongs to the bacterial ribosomal protein bL35 family.

This Agrobacterium fabrum (strain C58 / ATCC 33970) (Agrobacterium tumefaciens (strain C58)) protein is Large ribosomal subunit protein bL35.